Consider the following 730-residue polypeptide: Guanylate cyclase soluble subunit alpha-2 (730 aa).

The interval 1-53 is disordered; it reads MSRRKISSESFSSLGSDYLETSPEEEGECPLSKLCWNGSRSPPGPPGSRAAAM. The Guanylate cyclase domain maps to 519 to 646; that stretch reads TMLFSDIVGF…NNVTLASKFE (128 aa).

The protein belongs to the adenylyl cyclase class-4/guanylyl cyclase family. In terms of assembly, heterodimer of an alpha and a beta chain.

It localises to the cytoplasm. The enzyme catalyses GTP = 3',5'-cyclic GMP + diphosphate. With respect to regulation, activated by nitric oxide in the presence of magnesium or manganese ions. Its function is as follows. Has guanylyl cyclase on binding to the beta-1 subunit. This chain is Guanylate cyclase soluble subunit alpha-2 (Gucy1a2), found in Rattus norvegicus (Rat).